A 424-amino-acid chain; its full sequence is Imidazolonepropionase (424 aa).

Positions 84 and 86 each coordinate Fe(3+). Zn(2+)-binding residues include His84 and His86. Positions 93, 156, and 189 each coordinate 4-imidazolone-5-propanoate. Tyr156 lines the N-formimidoyl-L-glutamate pocket. His254 contributes to the Fe(3+) binding site. A Zn(2+)-binding site is contributed by His254. 4-imidazolone-5-propanoate is bound at residue Glu257. Asp328 is a Fe(3+) binding site. Residue Asp328 participates in Zn(2+) binding. Residues Asn330 and Gly332 each coordinate N-formimidoyl-L-glutamate. Ser333 contributes to the 4-imidazolone-5-propanoate binding site.

This sequence belongs to the metallo-dependent hydrolases superfamily. HutI family. The cofactor is Zn(2+). Fe(3+) is required as a cofactor.

The protein localises to the cytoplasm. The catalysed reaction is 4-imidazolone-5-propanoate + H2O = N-formimidoyl-L-glutamate. It participates in amino-acid degradation; L-histidine degradation into L-glutamate; N-formimidoyl-L-glutamate from L-histidine: step 3/3. Its function is as follows. Catalyzes the hydrolytic cleavage of the carbon-nitrogen bond in imidazolone-5-propanoate to yield N-formimidoyl-L-glutamate. It is the third step in the universal histidine degradation pathway. In Geobacillus thermodenitrificans (strain NG80-2), this protein is Imidazolonepropionase.